Reading from the N-terminus, the 301-residue chain is Haloalkane dehalogenase (301 aa).

The 238-residue stretch at 47–284 (PPIVLLHGEP…INASHFIQED (238 aa)) folds into the AB hydrolase-1 domain. Residue Asp123 is the Nucleophile of the active site. The active-site Proton donor is Asp250. The active-site Proton acceptor is His279.

Belongs to the haloalkane dehalogenase family. Type 1 subfamily. Monomer.

The catalysed reaction is 1-haloalkane + H2O = a halide anion + a primary alcohol + H(+). In terms of biological role, catalyzes hydrolytic cleavage of carbon-halogen bonds in halogenated aliphatic compounds, leading to the formation of the corresponding primary alcohols, halide ions and protons. The sequence is that of Haloalkane dehalogenase from Mycolicibacterium paratuberculosis (strain ATCC BAA-968 / K-10) (Mycobacterium paratuberculosis).